A 342-amino-acid polypeptide reads, in one-letter code: L-threonine 3-dehydrogenase (342 aa).

Cysteine 38 provides a ligand contact to Zn(2+). Catalysis depends on charge relay system residues threonine 40 and histidine 43. 6 residues coordinate Zn(2+): histidine 63, glutamate 64, cysteine 93, cysteine 96, cysteine 99, and cysteine 107. Residues isoleucine 175, aspartate 195, arginine 200, 262–264 (LGI), and 286–287 (IY) contribute to the NAD(+) site.

It belongs to the zinc-containing alcohol dehydrogenase family. Homotetramer. It depends on Zn(2+) as a cofactor.

It localises to the cytoplasm. It catalyses the reaction L-threonine + NAD(+) = (2S)-2-amino-3-oxobutanoate + NADH + H(+). The protein operates within amino-acid degradation; L-threonine degradation via oxydo-reductase pathway; glycine from L-threonine: step 1/2. Its function is as follows. Catalyzes the NAD(+)-dependent oxidation of L-threonine to 2-amino-3-ketobutyrate. This is L-threonine 3-dehydrogenase from Aeromonas salmonicida (strain A449).